A 224-amino-acid polypeptide reads, in one-letter code: Adenylate kinase (224 aa).

Position 10 to 15 (10 to 15 (GSGKGT)) interacts with ATP. Residues 30-59 (ESGAIFRENISKGTELGAKAKEYIDRGDLV) form an NMP region. AMP contacts are provided by residues S31, R36, 57 to 59 (DLV), 85 to 88 (GFPR), and Q92. Residues 126–165 (GRRLCVNDNNHPNNIFIDAIKPDGDKCRVCGGELKTRSDD) are LID. An ATP-binding site is contributed by R127. Positions 162 and 174 each coordinate AMP. P211 is a binding site for ATP.

The protein belongs to the adenylate kinase family. Monomer.

It localises to the cytoplasm. It carries out the reaction AMP + ATP = 2 ADP. It participates in purine metabolism; AMP biosynthesis via salvage pathway; AMP from ADP: step 1/1. Its function is as follows. Catalyzes the reversible transfer of the terminal phosphate group between ATP and AMP. Plays an important role in cellular energy homeostasis and in adenine nucleotide metabolism. This Desulfosudis oleivorans (strain DSM 6200 / JCM 39069 / Hxd3) (Desulfococcus oleovorans) protein is Adenylate kinase.